Consider the following 114-residue polypeptide: Seed trypsin/chymotrypsin inhibitor TI5-72 (114 aa).

The N-terminal stretch at 1–28 (MELMNKKVMMKLALMVFLLSFAANVVNA) is a signal peptide. Positions 29–42 (RFDSTSFITQVLSN) are excised as a propeptide. Cystine bridges form between cysteine 50-cysteine 103, cysteine 51-cysteine 66, cysteine 54-cysteine 99, cysteine 56-cysteine 64, cysteine 73-cysteine 80, cysteine 77-cysteine 92, and cysteine 82-cysteine 90.

Belongs to the Bowman-Birk serine protease inhibitor family. In terms of tissue distribution, seed.

Its function is as follows. Inhibitor of trypsin and of chymotrypsin. May function as a natural phytochemical defense against predators. The protein is Seed trypsin/chymotrypsin inhibitor TI5-72 (TI572) of Pisum sativum (Garden pea).